We begin with the raw amino-acid sequence, 200 residues long: Anthranilate synthase component 2, pyocyanine specific (200 aa).

Residues 2-195 enclose the Glutamine amidotransferase type-1 domain; that stretch reads RITLLDNFDS…LLWCGALAVR (194 aa). 56–58 is an L-glutamine binding site; the sequence is GPG. The active-site Nucleophile; for GATase activity is C83. Residues Q87 and 133–134 each bind L-glutamine; that span reads SL. Active-site for GATase activity residues include H169 and E171.

Heterotetramer consisting of two non-identical subunits: a beta subunit (PhnB) and a large alpha subunit (PhnA).

The catalysed reaction is chorismate + L-glutamine = anthranilate + pyruvate + L-glutamate + H(+). It participates in secondary metabolite biosynthesis; pyocyanine biosynthesis. Its function is as follows. Part of a heterotetrameric complex that catalyzes the two-step biosynthesis of anthranilate, a precursor for Pseudomonas quinolone signal (2-heptyl-3-hydroxy-4-quinolone; PQS) production which is required to induce the genes for the biosynthesis of the virulence factor pyocyanine (PCN), a characteristic blue-green phenazine pigment produced by P.aeruginosa. In the first step, the glutamine-binding beta subunit (PhnB) of anthranilate synthase (AS) provides the glutamine amidotransferase activity which generates ammonia as a substrate that, along with chorismate, is used in the second step, catalyzed by the large alpha subunit of AS (PhnA) to produce anthranilate. The sequence is that of Anthranilate synthase component 2, pyocyanine specific from Pseudomonas aeruginosa (strain ATCC 15692 / DSM 22644 / CIP 104116 / JCM 14847 / LMG 12228 / 1C / PRS 101 / PAO1).